We begin with the raw amino-acid sequence, 279 residues long: Toxin TxP-I (279 aa).

The first 14 residues, 1-14, serve as a signal peptide directing secretion; sequence MNLFFLFIIPTILA. The propeptide occupies 15–27; sequence VKPFRSFNNISLI.

In terms of processing, contains several disulfide bonds. Posterior glands which appear to be connected with the stylet through a series of ducts.

The protein resides in the secreted. Functionally, part of a complex mixture of neurotoxins which P.tritici utilizes to capture prey. It has contracting-paralyzing activity in insects. The sequence is that of Toxin TxP-I from Pyemotes tritici (Straw itch mite).